Reading from the N-terminus, the 85-residue chain is Small ribosomal subunit protein bS20 (85 aa).

This sequence belongs to the bacterial ribosomal protein bS20 family.

In terms of biological role, binds directly to 16S ribosomal RNA. This chain is Small ribosomal subunit protein bS20, found in Lactobacillus johnsonii (strain CNCM I-12250 / La1 / NCC 533).